Here is a 372-residue protein sequence, read N- to C-terminus: Putative aminopeptidase SgcX (372 aa).

His-67 and Asp-180 together coordinate a divalent metal cation. The active-site Proton acceptor is the Glu-212. A divalent metal cation is bound by residues Glu-213, Asp-235, and His-329.

Belongs to the peptidase M42 family. Requires a divalent metal cation as cofactor.

This is Putative aminopeptidase SgcX (sgcX) from Salmonella typhimurium (strain LT2 / SGSC1412 / ATCC 700720).